A 230-amino-acid chain; its full sequence is Large ribosomal subunit protein uL1 (230 aa).

The protein belongs to the universal ribosomal protein uL1 family. In terms of assembly, part of the 50S ribosomal subunit.

In terms of biological role, binds directly to 23S rRNA. The L1 stalk is quite mobile in the ribosome, and is involved in E site tRNA release. Protein L1 is also a translational repressor protein, it controls the translation of the L11 operon by binding to its mRNA. The protein is Large ribosomal subunit protein uL1 of Limosilactobacillus fermentum (strain NBRC 3956 / LMG 18251) (Lactobacillus fermentum).